The following is a 371-amino-acid chain: DNA replication and repair protein RecF (371 aa).

Residue 30–37 coordinates ATP; that stretch reads GANAQGKT.

It belongs to the RecF family.

It localises to the cytoplasm. Its function is as follows. The RecF protein is involved in DNA metabolism; it is required for DNA replication and normal SOS inducibility. RecF binds preferentially to single-stranded, linear DNA. It also seems to bind ATP. The sequence is that of DNA replication and repair protein RecF from Lacticaseibacillus paracasei (strain ATCC 334 / BCRC 17002 / CCUG 31169 / CIP 107868 / KCTC 3260 / NRRL B-441) (Lactobacillus paracasei).